The chain runs to 454 residues: UDP-N-acetylmuramoylalanine--D-glutamate ligase (454 aa).

119 to 125 (GSNGKTT) contacts ATP.

This sequence belongs to the MurCDEF family.

It localises to the cytoplasm. The catalysed reaction is UDP-N-acetyl-alpha-D-muramoyl-L-alanine + D-glutamate + ATP = UDP-N-acetyl-alpha-D-muramoyl-L-alanyl-D-glutamate + ADP + phosphate + H(+). It functions in the pathway cell wall biogenesis; peptidoglycan biosynthesis. In terms of biological role, cell wall formation. Catalyzes the addition of glutamate to the nucleotide precursor UDP-N-acetylmuramoyl-L-alanine (UMA). The polypeptide is UDP-N-acetylmuramoylalanine--D-glutamate ligase (Latilactobacillus sakei subsp. sakei (strain 23K) (Lactobacillus sakei subsp. sakei)).